The sequence spans 97 residues: Coiled-coil domain-containing protein 167 (97 aa).

Positions 36–80 form a coiled coil; it reads LRKMELTEEGRKSLEKEKSSLSSRLSNYERELKSLRHENRKNMLL. Residues 78–95 form a helical membrane-spanning segment; that stretch reads MLLSVAIFLLFAVGYYCW.

Its subcellular location is the membrane. The chain is Coiled-coil domain-containing protein 167 (ccdc167) from Xenopus tropicalis (Western clawed frog).